Consider the following 102-residue polypeptide: Small ribosomal subunit protein uS10 (102 aa).

This sequence belongs to the universal ribosomal protein uS10 family. Part of the 30S ribosomal subunit.

Its function is as follows. Involved in the binding of tRNA to the ribosomes. This Clostridium botulinum (strain ATCC 19397 / Type A) protein is Small ribosomal subunit protein uS10.